The primary structure comprises 202 residues: uncharacterized protein (202 aa).

Disordered stretches follow at residues 1 to 32 and 46 to 95; these read MRPE…ASLG and PSSV…PSYT. The segment covering 47 to 79 has biased composition (low complexity); the sequence is SSVSLSSSSSRRSMPSLGSSRSSSLPSTGSLRS.

This is an uncharacterized protein from Equus caballus (Horse).